A 134-amino-acid chain; its full sequence is Flagellar basal-body rod protein FlgC (134 aa).

The protein belongs to the flagella basal body rod proteins family. The basal body constitutes a major portion of the flagellar organelle and consists of four rings (L,P,S, and M) mounted on a central rod. The rod consists of about 26 subunits of FlgG in the distal portion, and FlgB, FlgC and FlgF are thought to build up the proximal portion of the rod with about 6 subunits each.

Its subcellular location is the bacterial flagellum basal body. The polypeptide is Flagellar basal-body rod protein FlgC (flgC) (Escherichia coli O157:H7).